We begin with the raw amino-acid sequence, 515 residues long: UBP3-associated protein BRE5 (515 aa).

In terms of domain architecture, NTF2 spans 8–140; the sequence is ICFAFLQNYY…FDITNDIIRF (133 aa). Low complexity predominate over residues 157 to 166; it reads QSNEENSVSA. Disordered regions lie at residues 157–410 and 485–515; these read QSNE…PVFS and KTVK…KRKD. Residues 168 to 201 show a composition bias toward basic and acidic residues; that stretch reads EEDKIRHESGVEKEKEKEKSPEISKPKAKKETVK. S187 is subject to Phosphoserine. A compositionally biased stretch (polar residues) spans 202–213; the sequence is DTTAPTESSTQE. Basic and acidic residues-rich tracts occupy residues 262–282 and 299–319; these read LNEK…KEGS and EVSD…EIKP. Position 282 is a phosphoserine (S282). A compositionally biased stretch (polar residues) spans 330 to 341; sequence SGNNASTPSSSP. T336 bears the Phosphothreonine mark. Residue S340 is modified to Phosphoserine. Over residues 374–396 the composition is skewed to basic and acidic residues; sequence IRPETLPKKPTERKFEMGNRRDN. Position 398 is a phosphoserine (S398). Residues 418–494 form the RRM domain; sequence YPIYIRGTNG…KTVKKPTSNN (77 aa). A compositionally biased stretch (polar residues) spans 489–503; sequence KPTSNNPPGIFTNGT. A compositionally biased stretch (basic residues) spans 504–515; the sequence is RSHRKQPLKRKD.

As to quaternary structure, heterotetramer with UBP3; contains two molecules of BRE5 and two molecules of UBP3. Forms a complex composed of CDC48, DOA1, deubiquitinase UBP3 and probably BRE5. Within the complex, interacts (via C-terminus) with CDC48; the interaction is direct and UBP3-independent.

Functionally, has a role in de-ubiquitination. In conjunction with UBP3, cleaves ubiquitin, leading to the subsequent mono-ubiquitination of sec23. This is UBP3-associated protein BRE5 (BRE5) from Saccharomyces cerevisiae (strain ATCC 204508 / S288c) (Baker's yeast).